The sequence spans 118 residues: Small ribosomal subunit protein uS13 (118 aa).

The disordered stretch occupies residues 94 to 118 (GLPLRGQRTKTNARTRKGPRKPIKK).

The protein belongs to the universal ribosomal protein uS13 family. In terms of assembly, part of the 30S ribosomal subunit. Forms a loose heterodimer with protein S19. Forms two bridges to the 50S subunit in the 70S ribosome.

In terms of biological role, located at the top of the head of the 30S subunit, it contacts several helices of the 16S rRNA. In the 70S ribosome it contacts the 23S rRNA (bridge B1a) and protein L5 of the 50S subunit (bridge B1b), connecting the 2 subunits; these bridges are implicated in subunit movement. Contacts the tRNAs in the A and P-sites. This Cellvibrio japonicus (strain Ueda107) (Pseudomonas fluorescens subsp. cellulosa) protein is Small ribosomal subunit protein uS13.